The following is a 635-amino-acid chain: MIKITLKDGKVMEFEEGIKISDIAMKISPALYKKALAAKIDGETVDLMTELHKDSSLEILTFEDEMGKWALRHTGAHILAQAVKRLYPEVKLAIGPAIDTGFYYDFEADFTFTPEMLEKIEAEIKKIIKENHKLERFELPREEAIDLMKEKNEDYKVELIEDLPEGEVISFYKQGDFTDLCAGPHVPSTGKVKSVKLLSLAGAYWRGDENNKMLQRIYGTAFTKKSELDEYLNMLEEAKKRDHRKLGKELDLFSIHEEGPGFPFFHPKGMIIRNILESFWREEHTKAGYQEIRTPLILNEALWHQSGHWDHYKENMYFTNIDDGDYAIKPMNCPGGILVYKNSMHSYRDLPLRLSELGIVHRHELSGALHGLMRVRCFTQDDAHLYMTKEQIKEEIVGIIKLIDKFYKLFGFEYFVELSTRPEDSMGSDEDWEIATNGLREALDSIGKEYRVNEGDGAFYGPKIDFHLKDCIGRTWQCGTIQLDFQMPERFDLSYIGADGEKHRPVMVHRTIYGSVERFIGILIEQYAGAFPTWLAPVQVKLMNITDAQYDYLKKVEEALKENNIRVEIDTRNEKIGYKIREAQLQKIPYMLILGDKEVEAGKVAVRSRKDGDLGAISLEEFIEKIKNEIKVKTN.

The TGS domain maps to 1–61 (MIKITLKDGK…HKDSSLEILT (61 aa)). Positions 242–532 (DHRKLGKELD…LIEQYAGAFP (291 aa)) are catalytic. Residues C333, H384, and H509 each contribute to the Zn(2+) site.

This sequence belongs to the class-II aminoacyl-tRNA synthetase family. Homodimer. Zn(2+) serves as cofactor.

The protein resides in the cytoplasm. The enzyme catalyses tRNA(Thr) + L-threonine + ATP = L-threonyl-tRNA(Thr) + AMP + diphosphate + H(+). Functionally, catalyzes the attachment of threonine to tRNA(Thr) in a two-step reaction: L-threonine is first activated by ATP to form Thr-AMP and then transferred to the acceptor end of tRNA(Thr). Also edits incorrectly charged L-seryl-tRNA(Thr). This is Threonine--tRNA ligase from Clostridium botulinum (strain Loch Maree / Type A3).